The sequence spans 449 residues: Zinc finger and BTB domain-containing protein 14 (449 aa).

Residues 36-102 enclose the BTB domain; it reads CDIAIVVEDV…MYTAKISVKK (67 aa). A Glycyl lysine isopeptide (Lys-Gly) (interchain with G-Cter in SUMO2) cross-link involves residue Lys-46. Residues 50–66 carry the Nuclear localization signal motif; the sequence is HRCVLAACSTYFKKLFK. A disordered region spans residues 156 to 194; sequence ADAQDDDVEEIGDQDDSPSDDTVEGTPPSQEDGKSPTTT. Acidic residues predominate over residues 157-178; the sequence is DAQDDDVEEIGDQDDSPSDDTV. Residues Lys-203 and Lys-249 each participate in a glycyl lysine isopeptide (Lys-Gly) (interchain with G-Cter in SUMO2) cross-link. C2H2-type zinc fingers lie at residues 277 to 304, 305 to 332, 333 to 360, 361 to 388, and 389 to 417; these read IACQ…ADRP, FVCE…GYKP, YSCE…NERP, FACH…GEKP, and FVCG…ERKQ. Residues 405–417 show a composition bias toward basic and acidic residues; sequence KRHENNMHSERKQ. Residues 405 to 424 are disordered; the sequence is KRHENNMHSERKQVTPSAIQ.

The protein belongs to the krueppel C2H2-type zinc-finger protein family. Interacts with ZBTB21. As to expression, ubiquitous.

It localises to the nucleus. Transcriptional activator of the dopamine transporter (DAT), binding it's promoter at the consensus sequence 5'-CCTGCACAGTTCACGGA-3'. Binds to 5'-d(GCC)(n)-3' trinucleotide repeats in promoter regions and acts as a repressor of the FMR1 gene. Transcriptional repressor of MYC and thymidine kinase promoters. The chain is Zinc finger and BTB domain-containing protein 14 (Zbtb14) from Mus musculus (Mouse).